Consider the following 828-residue polypeptide: Phenylalanine--tRNA ligase beta subunit (828 aa).

Residues 44-155 (GPVDGPLTVG…GTAEPGADGA (112 aa)) form the tRNA-binding domain. One can recognise a B5 domain in the interval 411-486 (WSPPAIQMPA…RLEGLEVIGS (76 aa)). Residues D464, D470, E473, and E474 each contribute to the Mg(2+) site. Residues 734 to 827 (SPFPAVFQDV…AAEAVGAELR (94 aa)) form the FDX-ACB domain.

Belongs to the phenylalanyl-tRNA synthetase beta subunit family. Type 1 subfamily. In terms of assembly, tetramer of two alpha and two beta subunits. Mg(2+) serves as cofactor.

It localises to the cytoplasm. It carries out the reaction tRNA(Phe) + L-phenylalanine + ATP = L-phenylalanyl-tRNA(Phe) + AMP + diphosphate + H(+). The protein is Phenylalanine--tRNA ligase beta subunit of Mycolicibacterium paratuberculosis (strain ATCC BAA-968 / K-10) (Mycobacterium paratuberculosis).